A 467-amino-acid polypeptide reads, in one-letter code: Membrane-bound acylglycerophosphatidylinositol O-acyltransferase mboat7 (467 aa).

Residues 1–5 (MSPDE) are Cytoplasmic-facing. The chain crosses the membrane as a helical span at residues 6-22 (LVYLGILAATIPVGFLF). Residues 23–33 (RYLSPPVKQGA) are Lumenal-facing. A helical membrane pass occupies residues 34–57 (ALLLGLIISIATCGIHTLHSLCTV). The Cytoplasmic portion of the chain corresponds to 58-73 (LGTWIIIKINWRSAPA). The chain crosses the membrane as a helical span at residues 74–93 (LSLAWTFLYLLFFRLVTWFG). Topologically, residues 94–193 (LPQPTPFANA…LPGKEPCLQR (100 aa)) are lumenal. A helical membrane pass occupies residues 194 to 211 (LKMVPVYGLLFIAVNSVF). Over 212 to 230 (PLSYVRTEDFLEHNYFYRF) the chain is Cytoplasmic. A helical transmembrane segment spans residues 231-260 (FYMVAIFFVFRMRFYSAWCGAEAGCISAGL). The Lumenal portion of the chain corresponds to 261–421 (GCYPQGALSK…LKASDTISYW (161 aa)). A glycan (N-linked (GlcNAc...) asparagine) is linked at asparagine 316. A helical transmembrane segment spans residues 422 to 442 (SSIYFVIHIIAIVCIAVGQFM). Residues 443 to 467 (KGGRKREKRERGEGEKEDAVREKAE) are Cytoplasmic-facing. Positions 447–467 (KREKRERGEGEKEDAVREKAE) are disordered. Over residues 451–467 (RERGEGEKEDAVREKAE) the composition is skewed to basic and acidic residues.

Belongs to the membrane-bound acyltransferase family.

Its subcellular location is the endoplasmic reticulum membrane. The enzyme catalyses a 1-acyl-sn-glycero-3-phospho-(1D-myo-inositol) + (5Z,8Z,11Z,14Z)-eicosatetraenoyl-CoA = a 1-acyl-2-(5Z,8Z,11Z,14Z-eicosatetraenoyl)-sn-glycero-3-phospho-(1D-myo-inositol) + CoA. The catalysed reaction is (5Z,8Z,11Z,14Z)-eicosatetraenoyl-CoA + 1-hexadecanoyl-sn-glycero-3-phosphocholine = 1-hexadecanoyl-2-(5Z,8Z,11Z,14Z-eicosatetraenoyl)-sn-glycero-3-phosphocholine + CoA. It catalyses the reaction a 1-acyl-sn-glycero-3-phospho-(1D-myo-inositol) + an acyl-CoA = a 1,2-diacyl-sn-glycero-3-phospho-(1D-myo-inositol) + CoA. It carries out the reaction 1-octadecanoyl-sn-glycero-3-phospho-(1D-myo-inositol) + (5Z,8Z,11Z,14Z)-eicosatetraenoyl-CoA = 1-octadecanoyl-2-(5Z,8Z,11Z,14Z-eicosatetraenoyl)-sn-glycero-3-phospho-(1D-myo-inositol) + CoA. The protein operates within lipid metabolism; phospholipid metabolism. Acyltransferase which catalyzes the transfer of an acyl group from an acyl-CoA to a lysophosphatidylinositol (1-acylglycerophosphatidylinositol or LPI) leading to the production of a phosphatidylinositol (1,2-diacyl-sn-glycero-3-phosphoinositol or PI) and participates in the reacylation step of the phospholipid remodeling pathway also known as the Lands cycle. Prefers arachidonoyl-CoA as the acyl donor, thus contributing to the regulation of free levels arachidonic acid in cell. The polypeptide is Membrane-bound acylglycerophosphatidylinositol O-acyltransferase mboat7 (mboat7) (Danio rerio (Zebrafish)).